The following is a 79-amino-acid chain: MAFLKKSLFLVLFLGIVSLSICEEEKREGEEEEKQEEENEELSEEELRERRAWLDKLKSIGKVVGKVAIGVAKNLLNPQ.

The signal sequence occupies residues 1–22; sequence MAFLKKSLFLVLFLGIVSLSIC. A propeptide spanning residues 23–49 is cleaved from the precursor; that stretch reads EEEKREGEEEEKQEEENEELSEEELRE.

Belongs to the frog skin active peptide (FSAP) family. Dermaseptin subfamily. Expressed by the skin glands.

The protein localises to the secreted. In terms of biological role, has antibacterial activity. This Boana raniceps (Chaco tree frog) protein is Raniseptin-3.